A 125-amino-acid polypeptide reads, in one-letter code: Calcitonin receptor-stimulating peptide 3 (125 aa).

The first 25 residues, 1–25 (MGFWKFPPFLILSILVLYQAGMLHA), serve as a signal peptide directing secretion. Positions 26 to 79 (APFRMALGSSFDSATLTEEEMSLLLVAMVKDYVQMKATVLEQETEDFSITTQER) are excised as a propeptide. Cys81 and Cys86 are oxidised to a cystine. Position 116 is a leucine amide (Leu116). Residues 122-125 (QPQA) constitute a propeptide that is removed on maturation.

It belongs to the calcitonin family. Mainly expressed in the thyroid gland and CNS. Found in the nerve cells of cerebrum, hippocampus, hypothalamus, pons/midbrain and thalamus.

The protein resides in the secreted. This Sus scrofa (Pig) protein is Calcitonin receptor-stimulating peptide 3 (CRSP3).